An 800-amino-acid chain; its full sequence is Probable replication endonuclease from prophage-like region (800 aa).

Active-site O-(5'-phospho-DNA)-tyrosine intermediate residues include tyrosine 503 and tyrosine 507.

It belongs to the phage GPA family.

In terms of biological role, possible endonuclease which induces a single-strand cut and initiates DNA replication. The protein is Probable replication endonuclease from prophage-like region of Salmonella paratyphi A (strain ATCC 9150 / SARB42).